The following is a 339-amino-acid chain: Quinolinate synthase (339 aa).

Residues histidine 63 and serine 81 each contribute to the iminosuccinate site. Residue cysteine 126 participates in [4Fe-4S] cluster binding. Iminosuccinate contacts are provided by residues 152–154 (YVN) and serine 169. Cysteine 211 contributes to the [4Fe-4S] cluster binding site. Residues 237–239 (HPE) and threonine 254 contribute to the iminosuccinate site. A [4Fe-4S] cluster-binding site is contributed by cysteine 297.

The protein belongs to the quinolinate synthase family. Type 2 subfamily. It depends on [4Fe-4S] cluster as a cofactor.

It localises to the cytoplasm. The enzyme catalyses iminosuccinate + dihydroxyacetone phosphate = quinolinate + phosphate + 2 H2O + H(+). It functions in the pathway cofactor biosynthesis; NAD(+) biosynthesis; quinolinate from iminoaspartate: step 1/1. Functionally, catalyzes the condensation of iminoaspartate with dihydroxyacetone phosphate to form quinolinate. The protein is Quinolinate synthase of Xylella fastidiosa (strain 9a5c).